The sequence spans 104 residues: NADH-ubiquinone oxidoreductase 12 kDa subunit, mitochondrial (104 aa).

The protein belongs to the complex I NDUFS6 subunit family. As to quaternary structure, complex I is composed of about 40 different subunits.

It is found in the mitochondrion inner membrane. Its function is as follows. Accessory subunit of the mitochondrial membrane respiratory chain NADH dehydrogenase (Complex I), that is believed not to be involved in catalysis. Complex I functions in the transfer of electrons from NADH to the respiratory chain. The immediate electron acceptor for the enzyme is believed to be ubiquinone. In Neurospora crassa (strain ATCC 24698 / 74-OR23-1A / CBS 708.71 / DSM 1257 / FGSC 987), this protein is NADH-ubiquinone oxidoreductase 12 kDa subunit, mitochondrial (nuo-12.3).